Here is an 891-residue protein sequence, read N- to C-terminus: uncharacterized protein (891 aa).

The signal sequence occupies residues 1 to 20; the sequence is MKILKSLVLLVLFMAMPAKA. The next 6 membrane-spanning stretches (helical) occupy residues 525–545, 568–588, 614–634, 652–672, 685–705, and 776–796; these read VTIFGLMFVTGALKLTAVEVI, TYFFSAFTDGIDFFVTNVVGA, LLFIELLQIHNGLAFIAIITI, VIAFIGVTVMISLAPFFIILM, ISTLLSYVVQPTILLIFFLLI, and FLVLFTTALLFYSYCLMSYSL.

Belongs to the TrbL/VirB6 family.

It is found in the cell membrane. This is an uncharacterized protein from Rickettsia conorii (strain ATCC VR-613 / Malish 7).